The primary structure comprises 589 residues: Arginine--tRNA ligase (589 aa).

The 'HIGH' region motif lies at 123 to 133; that stretch reads ANVAKPMHVGH.

It belongs to the class-I aminoacyl-tRNA synthetase family. In terms of assembly, monomer.

Its subcellular location is the cytoplasm. It catalyses the reaction tRNA(Arg) + L-arginine + ATP = L-arginyl-tRNA(Arg) + AMP + diphosphate. The polypeptide is Arginine--tRNA ligase (Hyphomonas neptunium (strain ATCC 15444)).